The following is a 136-amino-acid chain: Calcitonin (136 aa).

An N-terminal signal peptide occupies residues 1-25; the sequence is MGFLKFSPFLVVSILLLYQACGLQA. Residues 26-82 constitute a propeptide that is removed on maturation; the sequence is VPLRSTLESSPGMATLSEEEARLLAALVQNYMQMKVRELEQEEEQEAEGSSLDSPRS. S42 is subject to Phosphoserine. The disordered stretch occupies residues 64-84; it reads LEQEEEQEAEGSSLDSPRSKR. An intrachain disulfide couples C85 to C91. An N-linked (GlcNAc...) asparagine glycan is attached at N87. A disordered region spans residues 114-136; the sequence is GAPGKKRDMAKDLETNHHPYFGN. Proline amide is present on P116. A compositionally biased stretch (basic and acidic residues) spans 118 to 130; sequence KKRDMAKDLETNH. Positions 121-136 are excised as a propeptide; the sequence is DMAKDLETNHHPYFGN.

It belongs to the calcitonin family.

It localises to the secreted. Calcitonin is a peptide hormone that causes a rapid but short-lived drop in the level of calcium and phosphate in blood by promoting the incorporation of those ions in the bones. Calcitonin function is mediated by the calcitonin receptor/CALCR and the CALCR-RAMP2 (AMYR2) receptor complex. The polypeptide is Calcitonin (Rattus norvegicus (Rat)).